Here is a 32-residue protein sequence, read N- to C-terminus: ilv operon leader peptide (32 aa).

This Escherichia coli O157:H7 protein is ilv operon leader peptide (ilvL).